The chain runs to 432 residues: Carbohydrate esterase MZ0003 (432 aa).

A signal peptide spans 1 to 25 (MQRTCVLIVLIVTSTMWTPDPDVYA). The GXSYXG catalytic site motif motif lies at 266 to 271 (GHSRLG). The active-site Nucleophile is Ser-268. Lys-272 and Trp-359 together coordinate substrate. His-409 (charge relay system) is an active-site residue.

The protein belongs to the carbohydrate esterase 15 (CE15) family. It depends on Does not require metal ions for activity. as a cofactor.

Its subcellular location is the periplasm. With respect to regulation, is inhibited by PMSF and by NaF in vitro, which is consistent with the catalytic nucleophile being a serine. Its function is as follows. Displays some glucuronoyl esterase activity in vitro, since it is able to hydrolyze methyl 4-O-methyl-D-glucopyranosyluronate, allyl D-glucuronate, benzyl D-glucuronate and D-glucuronic acid methyl ester. However, esters of glucuronic acid are probably not its biological substrate, as they are not present in the marine environment. Can also hydrolyze a range of other esters, including p-nitrophenyl acetate. More likely biologically-relevant substrates for MZ0003 and other marine bacterial CE15s are algal cell wall polysaccharides, as these would be readily available in this environment and could be used as energy sources. The chain is Carbohydrate esterase MZ0003 from Unknown prokaryotic organism.